The following is a 613-amino-acid chain: Dihydroxy-acid dehydratase (613 aa).

D81 serves as a coordination point for Mg(2+). A [2Fe-2S] cluster-binding site is contributed by C122. Residues D123 and K124 each coordinate Mg(2+). Position 124 is an N6-carboxylysine (K124). C197 is a [2Fe-2S] cluster binding site. E493 lines the Mg(2+) pocket. Residue S519 is the Proton acceptor of the active site.

Belongs to the IlvD/Edd family. Homodimer. The cofactor is [2Fe-2S] cluster. It depends on Mg(2+) as a cofactor.

It carries out the reaction (2R)-2,3-dihydroxy-3-methylbutanoate = 3-methyl-2-oxobutanoate + H2O. It catalyses the reaction (2R,3R)-2,3-dihydroxy-3-methylpentanoate = (S)-3-methyl-2-oxopentanoate + H2O. It participates in amino-acid biosynthesis; L-isoleucine biosynthesis; L-isoleucine from 2-oxobutanoate: step 3/4. Its pathway is amino-acid biosynthesis; L-valine biosynthesis; L-valine from pyruvate: step 3/4. In terms of biological role, functions in the biosynthesis of branched-chain amino acids. Catalyzes the dehydration of (2R,3R)-2,3-dihydroxy-3-methylpentanoate (2,3-dihydroxy-3-methylvalerate) into 2-oxo-3-methylpentanoate (2-oxo-3-methylvalerate) and of (2R)-2,3-dihydroxy-3-methylbutanoate (2,3-dihydroxyisovalerate) into 2-oxo-3-methylbutanoate (2-oxoisovalerate), the penultimate precursor to L-isoleucine and L-valine, respectively. The sequence is that of Dihydroxy-acid dehydratase from Corynebacterium glutamicum (strain R).